The following is a 324-amino-acid chain: 26S proteasome non-ATPase regulatory subunit 7 (324 aa).

The region spanning 9 to 144 is the MPN domain; it reads VVVHPLVLLS…TEAYISVEEV (136 aa). A Glycyl lysine isopeptide (Lys-Gly) (interchain with G-Cter in ubiquitin) cross-link involves residue Lys-180. Residues Lys-204, Lys-214, Lys-316, and Lys-317 each carry the N6-acetyllysine modification. The interval 281–324 is disordered; that stretch reads ANRDAEKKEGQEKEESKKDRKEDKEKDKDKEKSDVKKEEKKEKK.

This sequence belongs to the peptidase M67A family. As to quaternary structure, component of the 19S proteasome regulatory particle complex. The 26S proteasome consists of a 20S core particle (CP) and two 19S regulatory subunits (RP). The regulatory particle is made of a lid composed of 9 subunits including PSMD7, a base containing 6 ATPases and few additional components. Within the complex, PSMD7 interacts with subunit PSMD4 through their respective MPN domain. Interacts with TRIM5.

Component of the 26S proteasome, a multiprotein complex involved in the ATP-dependent degradation of ubiquitinated proteins. This complex plays a key role in the maintenance of protein homeostasis by removing misfolded or damaged proteins, which could impair cellular functions, and by removing proteins whose functions are no longer required. Therefore, the proteasome participates in numerous cellular processes, including cell cycle progression, apoptosis, or DNA damage repair. The chain is 26S proteasome non-ATPase regulatory subunit 7 (PSMD7) from Homo sapiens (Human).